Here is a 172-residue protein sequence, read N- to C-terminus: uncharacterized protein (172 aa).

One can recognise a PfpI endopeptidase domain in the interval 3-171 (KKVAIILADE…FNREIVKKLE (169 aa)).

It belongs to the peptidase C56 family.

This is an uncharacterized protein from Staphylococcus epidermidis (strain ATCC 35984 / DSM 28319 / BCRC 17069 / CCUG 31568 / BM 3577 / RP62A).